The following is a 908-amino-acid chain: Disease resistance protein RPP8 (908 aa).

Positions 15–57 (DLLSRESERLQGIDGQLDGLKRQLRSLQSLLKDADAKKHGSDR) form a coiled coil. Residues 146-459 (RQRVQREIRQ…AEGIYDGSTI (314 aa)) form the NB-ARC domain. 192–199 (GMGGIGKT) lines the ATP pocket. 9 LRR repeats span residues 575-600 (LTLL…IGGL), 601-623 (IHLR…MRNL), 648-673 (MIQL…DLVN), 693-718 (MTKL…SLRE), 722-746 (LETL…VLDH), 748-770 (IHLK…QFPP), 793-820 (LLHL…GFPQ), 842-867 (MPCL…KYIT), and 882-905 (KEKL…QFIN).

Belongs to the disease resistance NB-LRR family. RPP8/HRT subfamily. Interacts with the NAC protein TIP. Interacts with MORC1/CRT1. Interacts with COP1 and is subsequently degraded in a 26s proteasome dependent manner. In terms of tissue distribution, mostly expressed in leaves, and, to a lower extent, in roots.

It is found in the cell membrane. Its function is as follows. Disease resistance protein. Resistance proteins guard the plant against pathogens that contain an appropriate avirulence protein via an indirect interaction with this avirulence protein. That triggers a defense system including the hypersensitive response, which restricts the pathogen growth. The interaction with TIP (TCV-interacting protein) may be essential for the recognition of the avirulence proteins, and the triggering of the defense response. Triggers resistance to turnip crinkle virus (TCV) via a SAG101-dependent pathway. The protein is Disease resistance protein RPP8 (RPP8) of Arabidopsis thaliana (Mouse-ear cress).